Consider the following 586-residue polypeptide: Protein NRT1/ PTR FAMILY 5.3 (586 aa).

A run of 11 helical transmembrane segments spans residues 77–97 (WVGT…AHFG), 100–120 (ITFV…TLSV), 141–161 (ASVI…IGTG), 189–209 (FFNW…TVLV), 217–237 (WAIG…IFLL), 334–354 (PVLF…TLFI), 370–390 (IPPA…IVIY), 408–428 (ITLL…MIIA), 449–469 (AVPI…MGLA), 492–512 (LGTS…SILL), and 538–558 (NYYM…LVVI).

It belongs to the major facilitator superfamily. Proton-dependent oligopeptide transporter (POT/PTR) (TC 2.A.17) family. In terms of tissue distribution, expressed in roots and siliques.

It localises to the membrane. In terms of biological role, peptide transporter. This Arabidopsis thaliana (Mouse-ear cress) protein is Protein NRT1/ PTR FAMILY 5.3 (NPF5.3).